The chain runs to 235 residues: Aspartate/glutamate leucyltransferase (235 aa).

This sequence belongs to the R-transferase family. Bpt subfamily.

It is found in the cytoplasm. The enzyme catalyses N-terminal L-glutamyl-[protein] + L-leucyl-tRNA(Leu) = N-terminal L-leucyl-L-glutamyl-[protein] + tRNA(Leu) + H(+). It catalyses the reaction N-terminal L-aspartyl-[protein] + L-leucyl-tRNA(Leu) = N-terminal L-leucyl-L-aspartyl-[protein] + tRNA(Leu) + H(+). In terms of biological role, functions in the N-end rule pathway of protein degradation where it conjugates Leu from its aminoacyl-tRNA to the N-termini of proteins containing an N-terminal aspartate or glutamate. This Pseudomonas syringae pv. syringae (strain B728a) protein is Aspartate/glutamate leucyltransferase.